The following is a 160-amino-acid chain: Myosin catalytic light chain LC-1, mantle muscle (160 aa).

Residue Xaa-1 is modified to Blocked amino end (Xaa). EF-hand domains are found at residues 7-44, 83-118, and 119-153; these read DEIE…LGMN, TAAD…LGER, and ITED…VMAG.

In terms of biological role, in molluscan muscle, calcium regulation is associated with myosin rather than with actin. Muscle myosin contains two types of light chains: the catalytic light chain, essential for ATPase activity, and the regulatory light chain, a calcium-binding protein responsible for Ca(2+) dependent binding and Ca(2+) dependent Mg-ATPase activity. In Todarodes pacificus (Japanese flying squid), this protein is Myosin catalytic light chain LC-1, mantle muscle.